The primary structure comprises 443 residues: Glutamate--tRNA ligase 1 (443 aa).

The 'HIGH' region signature appears at 8-18 (PSPTGRLHVGN). Residues 239 to 243 (KLSKR) carry the 'KMSKS' region motif. Lys-242 is an ATP binding site.

It belongs to the class-I aminoacyl-tRNA synthetase family. Glutamate--tRNA ligase type 1 subfamily. As to quaternary structure, monomer.

It is found in the cytoplasm. The catalysed reaction is tRNA(Glu) + L-glutamate + ATP = L-glutamyl-tRNA(Glu) + AMP + diphosphate. Its function is as follows. Catalyzes the attachment of glutamate to tRNA(Glu) in a two-step reaction: glutamate is first activated by ATP to form Glu-AMP and then transferred to the acceptor end of tRNA(Glu). This is Glutamate--tRNA ligase 1 from Rhizorhabdus wittichii (strain DSM 6014 / CCUG 31198 / JCM 15750 / NBRC 105917 / EY 4224 / RW1) (Sphingomonas wittichii).